A 151-amino-acid polypeptide reads, in one-letter code: Transcriptional repressor NrdR (151 aa).

A zinc finger spans residues 3-34 (CPFCNSVDTSVKNSRPSDCKMSVRRRRSCDSC). The 91-residue stretch at 49 to 139 (VKVLKKDGSV…VYMNFSDVND (91 aa)) folds into the ATP-cone domain.

Belongs to the NrdR family. Requires Zn(2+) as cofactor.

Negatively regulates transcription of bacterial ribonucleotide reductase nrd genes and operons by binding to NrdR-boxes. This Anaplasma marginale (strain Florida) protein is Transcriptional repressor NrdR.